The chain runs to 243 residues: Ribosomal RNA small subunit methyltransferase J (243 aa).

S-adenosyl-L-methionine contacts are provided by residues 112 to 113 and D164; that span reads ER.

Belongs to the methyltransferase superfamily. RsmJ family.

It is found in the cytoplasm. It catalyses the reaction guanosine(1516) in 16S rRNA + S-adenosyl-L-methionine = N(2)-methylguanosine(1516) in 16S rRNA + S-adenosyl-L-homocysteine + H(+). Specifically methylates the guanosine in position 1516 of 16S rRNA. The sequence is that of Ribosomal RNA small subunit methyltransferase J from Legionella pneumophila subsp. pneumophila (strain Philadelphia 1 / ATCC 33152 / DSM 7513).